The chain runs to 404 residues: Protein ORF23 (404 aa).

The protein belongs to the lymphocryptovirus BTRF1 family. Interacts with ORF34.

Its subcellular location is the host nucleus. The protein resides in the host cytoplasm. Plays a role in the expression of late genes. This Homo sapiens (Human) protein is Protein ORF23 (ORF23).